Here is a 400-residue protein sequence, read N- to C-terminus: Phosphoglycerate kinase (400 aa).

Residues 23 to 25, R38, 61 to 64, R120, and R153 contribute to the substrate site; these read DLN and HFGR. ATP contacts are provided by residues K203, E325, and 355 to 358; that span reads GGDT.

The protein belongs to the phosphoglycerate kinase family. As to quaternary structure, monomer.

It localises to the cytoplasm. It carries out the reaction (2R)-3-phosphoglycerate + ATP = (2R)-3-phospho-glyceroyl phosphate + ADP. It functions in the pathway carbohydrate degradation; glycolysis; pyruvate from D-glyceraldehyde 3-phosphate: step 2/5. The chain is Phosphoglycerate kinase from Methylorubrum extorquens (strain PA1) (Methylobacterium extorquens).